A 278-amino-acid polypeptide reads, in one-letter code: uncharacterized protein (278 aa).

Residues 1–55 (MKIRERFSMVDLPVLIITAAIIGHDKYKAFHAGANDILQKPYHYSEFMARIQNLI) form the Response regulatory domain.

This is an uncharacterized protein from Bacillus subtilis (strain 168).